Consider the following 363-residue polypeptide: Pyrimidine monooxygenase RutA (363 aa).

FMN-binding positions include 49–50 (IK), N115, E124, 140–141 (RY), and S190.

It belongs to the NtaA/SnaA/DszA monooxygenase family. RutA subfamily.

The enzyme catalyses uracil + FMNH2 + NADH + O2 = (Z)-3-ureidoacrylate + FMN + NAD(+) + H2O + H(+). The catalysed reaction is thymine + FMNH2 + NADH + O2 = (Z)-2-methylureidoacrylate + FMN + NAD(+) + H2O + H(+). In terms of biological role, catalyzes the pyrimidine ring opening between N-3 and C-4 by an unusual flavin hydroperoxide-catalyzed mechanism, adding oxygen atoms in the process to yield ureidoacrylate peracid, that immediately reacts with FMN forming ureidoacrylate and FMN-N(5)-oxide. The FMN-N(5)-oxide reacts spontaneously with NADH to produce FMN. Requires the flavin reductase RutF to regenerate FMN in vivo. The chain is Pyrimidine monooxygenase RutA from Escherichia coli (strain SMS-3-5 / SECEC).